The chain runs to 100 residues: Sodium-influx-stimulating peptide (100 aa).

An N-terminal signal peptide occupies residues 1-23 (MLSSVALRYLLVLSLAFLAVVTS).

Post-translationally, three disulfide bonds are present. In terms of tissue distribution, expressed by the yellow cells, peptidergic (neuroendocrine) neurons of the central nervous system.

Its function is as follows. Stimulates integumental Na(+) uptake. Controls the activity of sodium pumps in the integument, pericardium, ureter and nephridial gland. In Lymnaea stagnalis (Great pond snail), this protein is Sodium-influx-stimulating peptide (SIS).